Reading from the N-terminus, the 370-residue chain is Putative F-box protein At1g46984 (370 aa).

The F-box domain occupies Y18–F64.

In Arabidopsis thaliana (Mouse-ear cress), this protein is Putative F-box protein At1g46984.